The primary structure comprises 217 residues: Ribulose-phosphate 3-epimerase (217 aa).

Residue S7 participates in substrate binding. 3 residues coordinate a divalent metal cation: H32, D34, and H65. Residue D34 is the Proton acceptor of the active site. Substrate is bound by residues H65, 141 to 144 (GFGG), 175 to 177 (DGG), and 197 to 198 (GS). D175 is an a divalent metal cation binding site. The Proton donor role is filled by D175.

Belongs to the ribulose-phosphate 3-epimerase family. The cofactor is a divalent metal cation.

It carries out the reaction D-ribulose 5-phosphate = D-xylulose 5-phosphate. It functions in the pathway carbohydrate degradation. Catalyzes the reversible epimerization of D-ribulose 5-phosphate to D-xylulose 5-phosphate. This chain is Ribulose-phosphate 3-epimerase, found in Bacillus subtilis (strain 168).